The primary structure comprises 279 residues: Replication protein A 32 kDa subunit A (279 aa).

A disordered region spans residues 1–33; it reads MFSSSQFEPNSGFSGGGFMSSQPSQAYESSSST. Over residues 19–32 the composition is skewed to low complexity; sequence MSSQPSQAYESSSS. Residues 73–148 constitute a DNA-binding region (OB); that stretch reads VSLVGLVCDK…QLLVFSVRPI (76 aa).

The protein belongs to the replication factor A protein 2 family. As to quaternary structure, heterotrimer of RPA1, RPA2 and RPA3 (canonical replication protein A complex). Interacts with ROS1. Binds to ASE1/At3g02920, PDX2, At5g62350, RPA1A/At2g06510, ARF1/At1g10630, At4g18590 and At3g52630. In terms of processing, phosphorylated in a cell-cycle-dependent manner (from the S phase until mitosis). In response to DNA damage, recruited to DNA-repair nuclear foci, as a hypophosphorylated form. As to expression, strongly expressed in shoot and root meristems. Present in seedlings, roots, leaves, siliques and flowers.

It is found in the nucleus. Its function is as follows. Component of the replication protein A complex (RPA) required for DNA recombination, repair and replication. The activity of RPA is mediated by single-stranded DNA binding and protein interactions. Required fo cell division in meristems. Involved in the maintenance of transcriptional epigenetic gene silencing (TGS) at specific loci (including some transposons) by regulating histone H3 acetylation, 'Lys-4' and 'Lys-9' methylation. The chain is Replication protein A 32 kDa subunit A (RPA2A) from Arabidopsis thaliana (Mouse-ear cress).